The sequence spans 169 residues: Chorismate pyruvate-lyase (169 aa).

The substrate site is built by methionine 37, arginine 79, leucine 117, and glutamate 158.

The protein belongs to the UbiC family. As to quaternary structure, monomer.

The protein resides in the cytoplasm. It carries out the reaction chorismate = 4-hydroxybenzoate + pyruvate. Its pathway is cofactor biosynthesis; ubiquinone biosynthesis. Removes the pyruvyl group from chorismate, with concomitant aromatization of the ring, to provide 4-hydroxybenzoate (4HB) for the ubiquinone pathway. This is Chorismate pyruvate-lyase from Proteus mirabilis (strain HI4320).